Reading from the N-terminus, the 724-residue chain is 1,3-beta-galactosyl-N-acetylhexosamine phosphorylase Cphy3030 (724 aa).

Asp-316 acts as the Proton donor in catalysis.

The protein belongs to the glycoside hydrolase 112 family.

The enzyme catalyses beta-D-galactosyl-(1-&gt;3)-N-acetyl-D-glucosamine + phosphate = alpha-D-galactose 1-phosphate + N-acetyl-D-glucosamine. Its function is as follows. Reversibly phosphorolyzes beta-D-galactopyranosyl-(1-&gt;3)-N-acetyl-D-glucosamine to form alpha-D-galactopyranose 1-phosphate and acetyl-D-glucosamine. Active towards galacto-N-biose and lacto-N-biose. Does not phosphorolyze galacto-N-tetraose or lacto-N-tetraose. In the reverse reaction has activity toward N-acetyl-D-glucosamine and N-acetyl-D-galactosamine, but not L-rhamnose, D-glucose or D-galactose. The polypeptide is 1,3-beta-galactosyl-N-acetylhexosamine phosphorylase Cphy3030 (Lachnoclostridium phytofermentans (strain ATCC 700394 / DSM 18823 / ISDg) (Clostridium phytofermentans)).